Here is a 347-residue protein sequence, read N- to C-terminus: Haptoglobin (347 aa).

The N-terminal stretch at 1-18 (MRALGAVVALLLCGQLFA) is a signal peptide. The 58-residue stretch at 31-88 (DSCPKPPEIPKGYVEHMVRYHCQTYYKLRTAGDGVYTLDSNKQWTNKVTGEKLPECEA) folds into the Sushi domain. Cystine bridges form between Cys-52–Cys-86 and Cys-90–Cys-207. Residues 103–345 (IMGGSLDAKG…ILDWIQTTIA (243 aa)) enclose the Peptidase S1 domain. Residues Asn-125, Asn-151, Asn-183, and Asn-232 are each glycosylated (N-linked (GlcNAc...) asparagine). Intrachain disulfides connect Cys-250/Cys-281 and Cys-292/Cys-322. Residues 259–264 (VPEKKT) are interaction with CD163.

Belongs to the peptidase S1 family. Tetramer of two alpha and two beta chains; disulfide-linked. The hemoglobin/haptoglobin complex is composed of a haptoglobin dimer bound to two hemoglobin alpha-beta dimers. Interacts with CD163. Interacts with ERGIC3. In terms of tissue distribution, expressed by the liver and secreted in plasma.

It localises to the secreted. In terms of biological role, as a result of hemolysis, hemoglobin is found to accumulate in the kidney and is secreted in the urine. Haptoglobin captures, and combines with free plasma hemoglobin to allow hepatic recycling of heme iron and to prevent kidney damage. Haptoglobin also acts as an antioxidant, has antibacterial activity and plays a role in modulating many aspects of the acute phase response. Hemoglobin/haptoglobin complexes are rapidly cleared by the macrophage CD163 scavenger receptor expressed on the surface of liver Kupfer cells through an endocytic lysosomal degradation pathway. The protein is Haptoglobin (HP) of Sus scrofa (Pig).